A 178-amino-acid chain; its full sequence is Ribosome maturation factor RimP (178 aa).

It belongs to the RimP family.

The protein localises to the cytoplasm. Functionally, required for maturation of 30S ribosomal subunits. This is Ribosome maturation factor RimP from Mycolicibacterium paratuberculosis (strain ATCC BAA-968 / K-10) (Mycobacterium paratuberculosis).